A 374-amino-acid polypeptide reads, in one-letter code: Alanine racemase (374 aa).

Catalysis depends on Lys34, which acts as the Proton acceptor; specific for D-alanine. Position 34 is an N6-(pyridoxal phosphate)lysine (Lys34). Arg138 provides a ligand contact to substrate. The Proton acceptor; specific for L-alanine role is filled by Tyr265. Residue Met313 coordinates substrate.

This sequence belongs to the alanine racemase family. The cofactor is pyridoxal 5'-phosphate.

It carries out the reaction L-alanine = D-alanine. It participates in amino-acid biosynthesis; D-alanine biosynthesis; D-alanine from L-alanine: step 1/1. Its function is as follows. Catalyzes the interconversion of L-alanine and D-alanine. May also act on other amino acids. The polypeptide is Alanine racemase (alr) (Hahella chejuensis (strain KCTC 2396)).